We begin with the raw amino-acid sequence, 104 residues long: Small ribosomal subunit protein uS10 (104 aa).

Belongs to the universal ribosomal protein uS10 family. Part of the 30S ribosomal subunit.

Its function is as follows. Involved in the binding of tRNA to the ribosomes. This chain is Small ribosomal subunit protein uS10, found in Helicobacter pylori (strain J99 / ATCC 700824) (Campylobacter pylori J99).